Reading from the N-terminus, the 404-residue chain is 2,3-bisphosphoglycerate-independent phosphoglycerate mutase (404 aa).

The tract at residues 155-183 (LSDMIGDSDPHREGLPPEKIRPTDPSGDR) is disordered. The segment covering 162–183 (SDPHREGLPPEKIRPTDPSGDR) has biased composition (basic and acidic residues).

The protein belongs to the BPG-independent phosphoglycerate mutase family. A-PGAM subfamily.

The enzyme catalyses (2R)-2-phosphoglycerate = (2R)-3-phosphoglycerate. It participates in carbohydrate degradation; glycolysis; pyruvate from D-glyceraldehyde 3-phosphate: step 3/5. Functionally, catalyzes the interconversion of 2-phosphoglycerate and 3-phosphoglycerate. This Thermoplasma acidophilum (strain ATCC 25905 / DSM 1728 / JCM 9062 / NBRC 15155 / AMRC-C165) protein is 2,3-bisphosphoglycerate-independent phosphoglycerate mutase.